The sequence spans 756 residues: Ribonucleoside-diphosphate reductase subunit alpha (756 aa).

An ATP-cone domain is found at 5 to 95 (LMVTKRDGTQ…IFHLRKKAYG (91 aa)). ATP is bound by residues K9, 15–21 (EQINLDK), T55, and K91. Residue T209 participates in GDP binding. C225 and C462 are oxidised to a cystine. Residues 232 to 234 (DSL), R262, and R269 contribute to the dTTP site. Residue N437 coordinates GDP. N437 acts as the Proton acceptor in catalysis. C439 serves as the catalytic Cysteine radical intermediate. Residues E441 and 623 to 625 (ETS) contribute to the GDP site. The active-site Proton acceptor is the E441.

The protein belongs to the ribonucleoside diphosphate reductase large chain family. In terms of assembly, tetramer of two alpha and two beta subunits.

It catalyses the reaction a 2'-deoxyribonucleoside 5'-diphosphate + [thioredoxin]-disulfide + H2O = a ribonucleoside 5'-diphosphate + [thioredoxin]-dithiol. Its activity is regulated as follows. Under complex allosteric control mediated by deoxynucleoside triphosphates and ATP binding to separate specificity and activation sites on the alpha subunit. The type of nucleotide bound at the specificity site determines substrate preference. It seems probable that ATP makes the enzyme reduce CDP and UDP, dGTP favors ADP reduction and dTTP favors GDP reduction. Stimulated by ATP and inhibited by dATP binding to the activity site. Functionally, provides the precursors necessary for DNA synthesis. Catalyzes the biosynthesis of deoxyribonucleotides from the corresponding ribonucleotides. This chain is Ribonucleoside-diphosphate reductase subunit alpha (nrdA), found in Haemophilus influenzae (strain ATCC 51907 / DSM 11121 / KW20 / Rd).